The sequence spans 419 residues: 26S proteasome regulatory subunit 8 homolog B (419 aa).

An ATP-binding site is contributed by 202 to 209 (GPPGTGKT). Lys-406 participates in a covalent cross-link: Glycyl lysine isopeptide (Lys-Gly) (interchain with G-Cter in ubiquitin).

Belongs to the AAA ATPase family. In terms of assembly, component of the 19S regulatory particle (RP/PA700) base subcomplex of the 26S proteasome. The 26S proteasome is composed of a core protease (CP), known as the 20S proteasome, capped at one or both ends by the 19S regulatory particle (RP/PA700). The RP/PA700 complex is composed of at least 17 different subunits in two subcomplexes, the base and the lid, which form the portions proximal and distal to the 20S proteolytic core, respectively.

It is found in the cytoplasm. It localises to the nucleus. The 26S proteasome is involved in the ATP-dependent degradation of ubiquitinated proteins. The regulatory (or ATPase) complex confers ATP dependency and substrate specificity to the 26S complex. In Arabidopsis thaliana (Mouse-ear cress), this protein is 26S proteasome regulatory subunit 8 homolog B (RPT6B).